The following is a 90-amino-acid chain: Small ribosomal subunit protein uS19 (90 aa).

The protein belongs to the universal ribosomal protein uS19 family.

Functionally, protein S19 forms a complex with S13 that binds strongly to the 16S ribosomal RNA. The chain is Small ribosomal subunit protein uS19 from Methylococcus capsulatus (strain ATCC 33009 / NCIMB 11132 / Bath).